A 359-amino-acid polypeptide reads, in one-letter code: Phosphoserine aminotransferase (359 aa).

Residue Arg42 participates in L-glutamate binding. Pyridoxal 5'-phosphate is bound by residues 76 to 77, Trp102, Thr152, Asp171, and Gln194; that span reads AS. Lys195 carries the post-translational modification N6-(pyridoxal phosphate)lysine. A pyridoxal 5'-phosphate-binding site is contributed by 236-237; it reads NT.

The protein belongs to the class-V pyridoxal-phosphate-dependent aminotransferase family. SerC subfamily. As to quaternary structure, homodimer. Pyridoxal 5'-phosphate is required as a cofactor.

It localises to the cytoplasm. It carries out the reaction O-phospho-L-serine + 2-oxoglutarate = 3-phosphooxypyruvate + L-glutamate. It catalyses the reaction 4-(phosphooxy)-L-threonine + 2-oxoglutarate = (R)-3-hydroxy-2-oxo-4-phosphooxybutanoate + L-glutamate. It functions in the pathway amino-acid biosynthesis; L-serine biosynthesis; L-serine from 3-phospho-D-glycerate: step 2/3. It participates in cofactor biosynthesis; pyridoxine 5'-phosphate biosynthesis; pyridoxine 5'-phosphate from D-erythrose 4-phosphate: step 3/5. Its function is as follows. Catalyzes the reversible conversion of 3-phosphohydroxypyruvate to phosphoserine and of 3-hydroxy-2-oxo-4-phosphonooxybutanoate to phosphohydroxythreonine. The protein is Phosphoserine aminotransferase of Vesicomyosocius okutanii subsp. Calyptogena okutanii (strain HA).